Here is a 469-residue protein sequence, read N- to C-terminus: Dynein axonemal assembly factor 11 (469 aa).

LRR repeat units follow at residues 20 to 43, 44 to 65, 66 to 89, and 90 to 110; these read IFSLEEISLHQQDLERIEHIDKWC, RELKILYLQNNLIGKIENVSKL, KKLEYLNLALNNIEKIENLEGCES, and LQKLDLTVNFVGELSSINSLQ. One can recognise an LRRCT domain in the interval 114–135; that stretch reads HLRELYLVGNPCAEYEGYRQYV. Basic and acidic residues-rich tracts occupy residues 179–213 and 261–286; these read KRAAEREEARSKLQGKQKESRKTQEKKPGFDRRWY and SRLETHRYLEEKRKSKESSSEGELKK. 2 disordered regions span residues 179 to 290 and 436 to 469; these read KRAA…KPPR and KTQAQGPLQFHKNKVKDTEDSEDFIDNTDVPPLM.

It belongs to the tilB family.

The protein resides in the cytoplasm. Its subcellular location is the cell projection. The protein localises to the cilium. It is found in the dynein axonemal particle. It localises to the flagellum. Its function is as follows. Involved in dynein arm assembly, is important for expression and transporting outer dynein arm (ODA) proteins from the cytoplasm to the cilia. In Xenopus laevis (African clawed frog), this protein is Dynein axonemal assembly factor 11 (dnaaf11).